The following is a 112-amino-acid chain: C-X-C motif chemokine 6 (112 aa).

An N-terminal signal peptide occupies residues 1–36; that stretch reads MRLLSSRAARVSGPSGSLCALLALLLLTPPGPLASA. Intrachain disulfides connect Cys48/Cys74 and Cys50/Cys90.

It belongs to the intercrine alpha (chemokine CxC) family.

It localises to the secreted. In terms of biological role, chemotactic for neutrophil granulocytes. Signals through binding and activation of its receptors (CXCR1 and CXCR2). In addition to its chemotactic and angiogenic properties, it has strong antibacterial activity against Gram-positive and Gram-negative bacteria (90-fold-higher when compared to CXCL5 and CXCL7). This is C-X-C motif chemokine 6 (CXCL6) from Bos taurus (Bovine).